The following is a 371-amino-acid chain: Phospho-N-acetylmuramoyl-pentapeptide-transferase (371 aa).

Transmembrane regions (helical) follow at residues 19–39 (LYWLLLLCLSGVALATDIYSG), 48–68 (IVAPLWTSTLVVTLLGFWAVP), 95–115 (TMGGIFFMPVALVLGWAWVAA), 119–139 (NLLEVSAAVLLTLCLGLVGWF), 155–175 (AKLRLGIELGSGLIFGLWLFL), 180–200 (ISGLALPFGLSLPIGVLFLAI), 227–247 (AIAFLGLALVVAPSWPGLMIF), 284–304 (AVGLITNTLWALLILSGLFLV), and 349–369 (VVSTFYACVAVLAVAACGLNA).

This sequence belongs to the glycosyltransferase 4 family. MraY subfamily. The cofactor is Mg(2+).

The protein resides in the cell inner membrane. The catalysed reaction is UDP-N-acetyl-alpha-D-muramoyl-L-alanyl-gamma-D-glutamyl-meso-2,6-diaminopimeloyl-D-alanyl-D-alanine + di-trans,octa-cis-undecaprenyl phosphate = di-trans,octa-cis-undecaprenyl diphospho-N-acetyl-alpha-D-muramoyl-L-alanyl-D-glutamyl-meso-2,6-diaminopimeloyl-D-alanyl-D-alanine + UMP. It participates in cell wall biogenesis; peptidoglycan biosynthesis. Its function is as follows. Catalyzes the initial step of the lipid cycle reactions in the biosynthesis of the cell wall peptidoglycan: transfers peptidoglycan precursor phospho-MurNAc-pentapeptide from UDP-MurNAc-pentapeptide onto the lipid carrier undecaprenyl phosphate, yielding undecaprenyl-pyrophosphoryl-MurNAc-pentapeptide, known as lipid I. The sequence is that of Phospho-N-acetylmuramoyl-pentapeptide-transferase from Acaryochloris marina (strain MBIC 11017).